The sequence spans 300 residues: Ribosomal protein L11 methyltransferase (300 aa).

The S-adenosyl-L-methionine site is built by Thr-147, Gly-168, Asp-190, and Asn-236.

The protein belongs to the methyltransferase superfamily. PrmA family.

It is found in the cytoplasm. It carries out the reaction L-lysyl-[protein] + 3 S-adenosyl-L-methionine = N(6),N(6),N(6)-trimethyl-L-lysyl-[protein] + 3 S-adenosyl-L-homocysteine + 3 H(+). In terms of biological role, methylates ribosomal protein L11. This chain is Ribosomal protein L11 methyltransferase, found in Leptospira interrogans serogroup Icterohaemorrhagiae serovar Lai (strain 56601).